A 247-amino-acid chain; its full sequence is Phycocyanobilin:ferredoxin oxidoreductase (247 aa).

This sequence belongs to the HY2 family.

It carries out the reaction (2R,3Z)-phycocyanobilin + 4 oxidized [2Fe-2S]-[ferredoxin] = biliverdin IXalpha + 4 reduced [2Fe-2S]-[ferredoxin] + 4 H(+). Catalyzes the four-electron reduction of biliverdin IX-alpha (2-electron reduction at both the A and D rings); the reaction proceeds via an isolatable 2-electron intermediate, 181,182-dihydrobiliverdin. The protein is Phycocyanobilin:ferredoxin oxidoreductase of Synechococcus sp. (strain CC9605).